The chain runs to 169 residues: Vimentin-type intermediate filament-associated coiled-coil protein (169 aa).

A coiled-coil region spans residues 7–89 (LQIREANAHL…VHSLQATVHQ (83 aa)). Residues 126-135 (RLGPLPASDP) show a composition bias toward low complexity. The tract at residues 126–169 (RLGPLPASDPGHPPPGGPGPPLDNSTGEEADRDHLQPAVFGTTV) is disordered. Residues 136 to 146 (GHPPPGGPGPP) are compositionally biased toward pro residues.

Its subcellular location is the cytoplasm. This chain is Vimentin-type intermediate filament-associated coiled-coil protein (VMAC), found in Homo sapiens (Human).